The primary structure comprises 755 residues: MSRDPLPFFPPLYLGGPEITTENCEREPIHIPGSIQPHGALLTADGHSGEVLQMSLNAATFLGQEPTVLRGQTLAALLPEQWPALQAALPPGCPDALQYRATLDWPAAGHLSLTVHRVGELLILEFEPTEAWDSTGPHALRNAMFALESAPNLRALAEVATQTVRELTGFDRVMLYKFAPDATGEVIAEARREGLHAFLGHRFPASDIPAQARALYTRHLLRLTADTRAAAVPLDPVLNPQTNAPTPLGGAVLRATSPMHMQYLRNMGVGSSLSVSVVVGGQLWGLIACHHQTPYVLPPDLRTTLEYLGRLLSLQVQVKEAADVAAFRQSLREHHARVALAAAHSLSPHDTLSDPALDLLGLMRAGGLILRFEGRWQTLGEVPPAPAVDALLAWLETQPGALVQTDALGQLWPAGADLAPSAAGLLAISVGEGWSECLVWLRPELRLEVAWGGATPDQAKDDLGPRHSFDTYLEEKRGYAEPWHPGEIEEAQDLRDTLTGALGERLSVIRDLNRALTQSNAEWRQYGFVISHHMQEPVRLISQFAELLTRQPRAQDGSPDSPQTERITGFLLRETSRLRSLTQDLHTYTALLSAPPPVRRPTPLGRVVDDVLQDLEPRIADTGASIEVAPELPVIAADAGLLRDLLLHLIGNALTFGGPEPRIAVRTERQGAGWSIAVSDQGAGIAPEYQERIFLLFQRLGSLDEALGNGLGLPLCRKIAELHGGTLTVESAPGEGSTFRCWLPDAGPLPGAADA.

A tetrapyrrole is bound at residue C24. The PAS domain occupies 26–94 (REPIHIPGSI…LQAALPPGCP (69 aa)). Residues 95-504 (DALQYRATLD…RDTLTGALGE (410 aa)) form a chromophore binding domain region. Residues 152–316 (NLRALAEVAT…YLGRLLSLQV (165 aa)) enclose the GAF domain. Residues 529–747 (VISHHMQEPV…TFRCWLPDAG (219 aa)) form the Histidine kinase domain. H532 is modified (phosphohistidine; by autocatalysis).

The protein in the N-terminal section; belongs to the phytochrome family. Contains one covalently linked tetrapyrrole chromophore. Lacks the cysteine conserved in plant phytochromes (at the position of Met-259) that binds chromophore. An engineered sequence used for X-ray crystallography forms a thioether link to biliverdin through Cys-24. The natural sequence can bind phycocyanobilin and phytochromobilin in vitro, but the identity of the natural chromophore is unknown.

The enzyme catalyses ATP + protein L-histidine = ADP + protein N-phospho-L-histidine.. Functionally, photoreceptor which exists in two forms that are reversibly interconvertible by light: the R form that absorbs maximally in the red region of the spectrum and the FR form that absorbs maximally in the far-red region. Also has a slight blue shift for the far-red maximum. Could also absorb green light. May participate in regulating pigment synthesis like the carotenoid deinoxanthin which could protect the bacterium from intense visible light. This is Bacteriophytochrome (bphP) from Deinococcus radiodurans (strain ATCC 13939 / DSM 20539 / JCM 16871 / CCUG 27074 / LMG 4051 / NBRC 15346 / NCIMB 9279 / VKM B-1422 / R1).